We begin with the raw amino-acid sequence, 233 residues long: Phosphoribosylformylglycinamidine synthase subunit PurQ (233 aa).

One can recognise a Glutamine amidotransferase type-1 domain in the interval 3–233 (SAVLVFPGIN…GLVEHLKTAA (231 aa)). Cys87 functions as the Nucleophile in the catalytic mechanism. Catalysis depends on residues His204 and Glu206.

In terms of assembly, part of the FGAM synthase complex composed of 1 PurL, 1 PurQ and 2 PurS subunits.

The protein resides in the cytoplasm. It catalyses the reaction N(2)-formyl-N(1)-(5-phospho-beta-D-ribosyl)glycinamide + L-glutamine + ATP + H2O = 2-formamido-N(1)-(5-O-phospho-beta-D-ribosyl)acetamidine + L-glutamate + ADP + phosphate + H(+). The catalysed reaction is L-glutamine + H2O = L-glutamate + NH4(+). The protein operates within purine metabolism; IMP biosynthesis via de novo pathway; 5-amino-1-(5-phospho-D-ribosyl)imidazole from N(2)-formyl-N(1)-(5-phospho-D-ribosyl)glycinamide: step 1/2. In terms of biological role, part of the phosphoribosylformylglycinamidine synthase complex involved in the purines biosynthetic pathway. Catalyzes the ATP-dependent conversion of formylglycinamide ribonucleotide (FGAR) and glutamine to yield formylglycinamidine ribonucleotide (FGAM) and glutamate. The FGAM synthase complex is composed of three subunits. PurQ produces an ammonia molecule by converting glutamine to glutamate. PurL transfers the ammonia molecule to FGAR to form FGAM in an ATP-dependent manner. PurS interacts with PurQ and PurL and is thought to assist in the transfer of the ammonia molecule from PurQ to PurL. This is Phosphoribosylformylglycinamidine synthase subunit PurQ from Rhodopseudomonas palustris (strain HaA2).